The chain runs to 1172 residues: Putative cadmium/zinc-transporting ATPase HMA4 (1172 aa).

Residues 1-93 (MALQNKEEEK…VRVNGETSFK (93 aa)) are Cytoplasmic-facing. Residues 17–83 (QKSYFDVLGI…ALNEARLEAN (67 aa)) enclose the HMA domain. The chain crosses the membrane as a helical span at residues 94–115 (NKWPSPFAVVSGLLLLLSFLKF). Residues 116 to 118 (VYS) are Extracellular-facing. A helical transmembrane segment spans residues 119 to 138 (PLRWLAVAAVAAGIYPILAK). Topologically, residues 139 to 145 (AFASIKR) are cytoplasmic. Residues 146–166 (PRIDINILVIITVIATLAMQD) traverse the membrane as a helical segment. Position 167 (Phe167) is a topological domain, extracellular. A helical transmembrane segment spans residues 168–188 (MEAAAVVFLFTISDWLETRAS). Residues 189–314 (YKATSVMQSL…KTKSQRLIDK (126 aa)) are Cytoplasmic-facing. Residues 315 to 337 (CSQYYTPAIILVSACVAIVPVIM) form a helical membrane-spanning segment. Topologically, residues 338–345 (KVHNLKHW) are extracellular. Residues 346 to 363 (FHLALVVLVSGCPCGLIL) form a helical membrane-spanning segment. The Cytoplasmic portion of the chain corresponds to 364–656 (STPVATFCAL…KLARRARRKV (293 aa)). The active-site 4-aspartylphosphate intermediate is Asp401. The Mg(2+) site is built by Asp601 and Asp605. Residues 657 to 676 (VENVCLSIILKAGILALAFA) form a helical membrane-spanning segment. Over 677 to 680 (GHPL) the chain is Extracellular. Residues 681 to 700 (IWAAVLVDVGTCLLVIFNSM) traverse the membrane as a helical segment. Residues 701 to 1172 (LLLREKKKIG…HHHHHHHVSA (472 aa)) lie on the Cytoplasmic side of the membrane.

It belongs to the cation transport ATPase (P-type) (TC 3.A.3) family. Type IB subfamily.

It localises to the membrane. It carries out the reaction Zn(2+)(in) + ATP + H2O = Zn(2+)(out) + ADP + phosphate + H(+). It catalyses the reaction Cd(2+)(in) + ATP + H2O = Cd(2+)(out) + ADP + phosphate + H(+). Involved in cadmium/zinc transport. In Arabidopsis thaliana (Mouse-ear cress), this protein is Putative cadmium/zinc-transporting ATPase HMA4 (HMA4).